The primary structure comprises 431 residues: Probable indole-3-pyruvate monooxygenase YUCCA7 (431 aa).

36–41 (GAGPSG) provides a ligand contact to FAD. Residue 207 to 212 (GCGNSG) participates in NADP(+) binding.

The protein belongs to the FMO family. It depends on FAD as a cofactor. As to expression, expressed in shoot apex regions and siliques, and at high levels in roots. Detected in flowers, stems and leaves.

It carries out the reaction indole-3-pyruvate + NADPH + O2 + H(+) = (indol-3-yl)acetate + CO2 + NADP(+) + H2O. Its pathway is plant hormone metabolism; auxin biosynthesis. Functionally, involved in auxin biosynthesis. Belongs to the set of redundant YUCCA genes probably responsible for auxin biosynthesis in roots. This chain is Probable indole-3-pyruvate monooxygenase YUCCA7 (YUC7), found in Arabidopsis thaliana (Mouse-ear cress).